The chain runs to 335 residues: Ferrochelatase (335 aa).

The Fe cation site is built by histidine 207 and glutamate 288.

This sequence belongs to the ferrochelatase family.

The protein localises to the cytoplasm. It catalyses the reaction heme b + 2 H(+) = protoporphyrin IX + Fe(2+). It functions in the pathway porphyrin-containing compound metabolism; protoheme biosynthesis; protoheme from protoporphyrin-IX: step 1/1. Catalyzes the ferrous insertion into protoporphyrin IX. The polypeptide is Ferrochelatase (Helicobacter pylori (strain HPAG1)).